Consider the following 159-residue polypeptide: MSDEQQQPVFSIEKVYVKDLSVEIPNAPRIYLERETPEVNIQLHSKSERIDETLYEVVLTTTVTAKIKDKTMFLVEIQQGGVFQIRHVPEAEMELVLGIACPNILFPYLREAVSDTVTRAGFHPVILNPVNFEALYYQRKQQTENSAAPQTPETQQITH.

It belongs to the SecB family. As to quaternary structure, homotetramer, a dimer of dimers. One homotetramer interacts with 1 SecA dimer.

It localises to the cytoplasm. In terms of biological role, one of the proteins required for the normal export of preproteins out of the cell cytoplasm. It is a molecular chaperone that binds to a subset of precursor proteins, maintaining them in a translocation-competent state. It also specifically binds to its receptor SecA. The polypeptide is Protein-export protein SecB (Nitrosospira multiformis (strain ATCC 25196 / NCIMB 11849 / C 71)).